A 114-amino-acid polypeptide reads, in one-letter code: Probable non-functional T cell receptor beta variable 5-3 (114 aa).

Residues 1–21 (MGPGLLCWELLYLLGAGPVEA) form the signal peptide. The Ig-like domain occupies 22–114 (GVTQSPTHLI…SALYLCARSL (93 aa)). An intrachain disulfide couples Cys-42 to Cys-110. Asn-96 carries N-linked (GlcNAc...) asparagine glycosylation.

As to quaternary structure, alpha-beta TR is a heterodimer composed of an alpha and beta chain; disulfide-linked. The alpha-beta TR is associated with the transmembrane signaling CD3 coreceptor proteins to form the TR-CD3 (TcR or TCR). The assembly of alpha-beta TR heterodimers with CD3 occurs in the endoplasmic reticulum where a single alpha-beta TR heterodimer associates with one CD3D-CD3E heterodimer, one CD3G-CD3E heterodimer and one CD247 homodimer forming a stable octameric structure. CD3D-CD3E and CD3G-CD3E heterodimers preferentially associate with TR alpha and TR beta chains, respectively. The association of the CD247 homodimer is the last step of TcR assembly in the endoplasmic reticulum and is required for transport to the cell surface.

It localises to the cell membrane. In terms of biological role, probable non-functional open reading frame (ORF) of V region of the variable domain of T cell receptor (TR) beta chain. Non-functional ORF generally cannot participate in the synthesis of a productive T cell receptor (TR) chain due to altered V-(D)-J or switch recombination and/or splicing site (at mRNA level) and/or conserved amino acid change (protein level). Alpha-beta T cell receptors are antigen specific receptors which are essential to the immune response and are present on the cell surface of T lymphocytes. Recognize peptide-major histocompatibility (MH) (pMH) complexes that are displayed by antigen presenting cells (APC), a prerequisite for efficient T cell adaptive immunity against pathogens. Binding of alpha-beta TR to pMH complex initiates TR-CD3 clustering on the cell surface and intracellular activation of LCK that phosphorylates the ITAM motifs of CD3G, CD3D, CD3E and CD247 enabling the recruitment of ZAP70. In turn ZAP70 phosphorylates LAT, which recruits numerous signaling molecules to form the LAT signalosome. The LAT signalosome propagates signal branching to three major signaling pathways, the calcium, the mitogen-activated protein kinase (MAPK) kinase and the nuclear factor NF-kappa-B (NF-kB) pathways, leading to the mobilization of transcription factors that are critical for gene expression and essential for T cell growth and differentiation. The T cell repertoire is generated in the thymus, by V-(D)-J rearrangement. This repertoire is then shaped by intrathymic selection events to generate a peripheral T cell pool of self-MH restricted, non-autoaggressive T cells. Post-thymic interaction of alpha-beta TR with the pMH complexes shapes TR structural and functional avidity. The sequence is that of Probable non-functional T cell receptor beta variable 5-3 from Homo sapiens (Human).